A 519-amino-acid polypeptide reads, in one-letter code: Chaperone SurA (519 aa).

The N-terminal stretch at 1–31 is a signal peptide; it reads MMRSLHSLRRMSGTVLALMLAAGLPLSAAQA. Low complexity-rich tracts occupy residues 31–45 and 197–207; these read AQPA…QKPA and PAAAQATRAPA. Disordered stretches follow at residues 31–50 and 196–221; these read AQPA…PAPS and NPAA…PAQS. Residues 223–324 enclose the PpiC 1 domain; it reads PAMLVLAQIL…NGFHILKVVD (102 aa). The segment at 328–361 is disordered; that stretch reads GGQPAQAARPAPAPAPQQPSSFQEGPSVAAPQGP. Residues 364–463 form the PpiC 2 domain; the sequence is VTQTHARHIL…FGWHLIQVLE (100 aa).

It is found in the periplasm. It catalyses the reaction [protein]-peptidylproline (omega=180) = [protein]-peptidylproline (omega=0). Functionally, chaperone involved in the correct folding and assembly of outer membrane proteins. Recognizes specific patterns of aromatic residues and the orientation of their side chains, which are found more frequently in integral outer membrane proteins. May act in both early periplasmic and late outer membrane-associated steps of protein maturation. The polypeptide is Chaperone SurA (Bordetella pertussis (strain Tohama I / ATCC BAA-589 / NCTC 13251)).